A 469-amino-acid polypeptide reads, in one-letter code: Putative dipeptidase SAUSA300_1697 (469 aa).

Position 84 (histidine 84) interacts with Zn(2+). The active site involves aspartate 86. Zn(2+) is bound at residue aspartate 115. Residue glutamate 149 is the Proton acceptor of the active site. 3 residues coordinate Zn(2+): glutamate 150, aspartate 173, and histidine 440.

It belongs to the peptidase M20A family. The cofactor is Zn(2+).

The sequence is that of Putative dipeptidase SAUSA300_1697 from Staphylococcus aureus (strain USA300).